Here is a 400-residue protein sequence, read N- to C-terminus: Sphingosine 1-phosphate receptor 5 (400 aa).

The Extracellular segment spans residues 1 to 41; sequence MEPGLLRPAPVSEVIVLHYNYTGKLRGARYQPGAGLRADAA. Asn-20 is a glycosylation site (N-linked (GlcNAc...) asparagine). A helical transmembrane segment spans residues 42 to 62; it reads VCLAVCAFIVLENLAVLLVLV. At 63–68 the chain is on the cytoplasmic side; it reads RHPRFH. A helical transmembrane segment spans residues 69-89; that stretch reads APMFLLLGSLTLSDLLAGAAY. The Extracellular portion of the chain corresponds to 90 to 111; the sequence is ATNILLSGPLTLRLSPALWFAR. The chain crosses the membrane as a helical span at residues 112–132; that stretch reads EGGVFVALAASVLSLLAIALE. Residues 133-151 are Cytoplasmic-facing; sequence RHLTMARRGPAPAASRART. Residues 152–172 traverse the membrane as a helical segment; sequence LAMAVAAWGASLLLGLLPALG. Over 173–192 the chain is Extracellular; it reads WNCLGRLETCSTVLPLYAKA. Residues 193 to 213 traverse the membrane as a helical segment; it reads YVLFCVLAFLGILAAICALYA. Over 214–253 the chain is Cytoplasmic; it reads RIYCQVRANARRLRAGPGSRRATSSSRSRHTPRSLALLRT. Residues 254 to 274 traverse the membrane as a helical segment; the sequence is LSVVLLAFVACWGPLFLLLLL. Topologically, residues 275–288 are extracellular; the sequence is DVACPARACPVLLQ. The helical transmembrane segment at 289-309 threads the bilayer; sequence ADPFLGLAMANSLLNPIIYTF. Over 310–400 the chain is Cytoplasmic; it reads TNRDLRHALL…NRSLVPTATD (91 aa). The S-palmitoyl cysteine moiety is linked to residue Cys-324. A disordered region spans residues 331–400; the sequence is QDSSNSLQRS…NRSLVPTATD (70 aa). A phosphoserine mark is found at Ser-340, Ser-342, and Ser-384. Polar residues predominate over residues 360–400; that stretch reads DRSSSPSEHLSPQQDGVDTSCSTGSPGVATANRSLVPTATD.

This sequence belongs to the G-protein coupled receptor 1 family. In terms of tissue distribution, expressed in spleen and brain. In the CNS expression is restricted to oligodendrocytes.

The protein resides in the cell membrane. Functionally, receptor for the lysosphingolipid sphingosine 1-phosphate (S1P). S1P is a bioactive lysophospholipid that elicits diverse physiological effect on most types of cells and tissues. Is coupled to both the G(i/0)alpha and G(12) subclass of heteromeric G-proteins. S1P activation on oligodendroglial cells modulates two distinct functional pathways mediating either process retraction or cell survival. S1P activation on O4-positive pre-oligodendrocytes induces process retraction via a Rho kinase/collapsin response-mediated protein signaling pathway. The S1P-induced survival of mature oligodendrocytes is mediated through a pertussis toxin-sensitive, Akt-dependent pathway. S1P activation on oligodendroglial cells modulates two distinct functional pathways mediating either process retraction or cell survival. These effects depend on the developmental stage of the cell. The chain is Sphingosine 1-phosphate receptor 5 (S1pr5) from Mus musculus (Mouse).